The chain runs to 563 residues: Arginine--tRNA ligase (563 aa).

The 'HIGH' region motif lies at 121-131 (PNIAKPFSIGH).

The protein belongs to the class-I aminoacyl-tRNA synthetase family. As to quaternary structure, monomer.

Its subcellular location is the cytoplasm. It catalyses the reaction tRNA(Arg) + L-arginine + ATP = L-arginyl-tRNA(Arg) + AMP + diphosphate. The polypeptide is Arginine--tRNA ligase (Streptococcus pyogenes serotype M6 (strain ATCC BAA-946 / MGAS10394)).